The sequence spans 330 residues: Aspartate--ammonia ligase (330 aa).

Belongs to the class-II aminoacyl-tRNA synthetase family. AsnA subfamily.

It localises to the cytoplasm. The enzyme catalyses L-aspartate + NH4(+) + ATP = L-asparagine + AMP + diphosphate + H(+). It participates in amino-acid biosynthesis; L-asparagine biosynthesis; L-asparagine from L-aspartate (ammonia route): step 1/1. The sequence is that of Aspartate--ammonia ligase from Actinobacillus pleuropneumoniae serotype 7 (strain AP76).